Here is a 362-residue protein sequence, read N- to C-terminus: Vignain (362 aa).

An N-terminal signal peptide occupies residues 1–20 (MATKKLLWVVLSFSLVLGVA). The propeptide at 21 to 131 (NSFDFHDKDL…YEKVVSVPPS (111 aa)) is activation peptide. Cystine bridges form between C149–C191, C183–C224, and C282–C334. C152 is a catalytic residue. Catalysis depends on residues H288 and N309. 2 N-linked (GlcNAc...) asparagine glycosylation sites follow: N326 and N346. The Prevents secretion from ER motif lies at 359 to 362 (KDEL).

This sequence belongs to the peptidase C1 family. As to quaternary structure, monomer.

The protein localises to the endoplasmic reticulum lumen. Thought to be involved in the hydrolysis of stored seed proteins. This Phaseolus vulgaris (Kidney bean) protein is Vignain.